Here is a 362-residue protein sequence, read N- to C-terminus: E3 ubiquitin-protein ligase TM129 (362 aa).

At 1 to 6 (MESPAV) the chain is on the lumenal side. A helical membrane pass occupies residues 7 to 27 (TFTLAYVVFSVCFVFTPNEFH). At 28–56 (SAGITVQNLLSGWLGSEDVAFVHYHIRRS) the chain is on the cytoplasmic side. The helical transmembrane segment at 57 to 77 (SATLLAHSLLPMGYFIGMCFA) threads the bilayer. Over 78-94 (APEKELYNVHKAADGWK) the chain is Lumenal. The helical transmembrane segment at 95-115 (VFVLMAVLLPIATSILAFYWS) threads the bilayer. Topologically, residues 116–362 (QKRWSNHPLA…FCIVDVCIVR (247 aa)) are cytoplasmic. An RING-type; degenerate zinc finger spans residues 285–350 (CIGCMQTNAN…SSQVPCPTCR (66 aa)).

Belongs to the TMEM129 family. Integral component of ER-resident dislocation complexes.

It is found in the endoplasmic reticulum membrane. It catalyses the reaction S-ubiquitinyl-[E2 ubiquitin-conjugating enzyme]-L-cysteine + [acceptor protein]-L-lysine = [E2 ubiquitin-conjugating enzyme]-L-cysteine + N(6)-ubiquitinyl-[acceptor protein]-L-lysine.. It participates in protein modification; protein ubiquitination. E3 ubiquitin-protein ligase involved in ER-associated protein degradation, preferentially associates with the E2 enzyme UBE2J2. This is E3 ubiquitin-protein ligase TM129 (tmem129) from Xenopus laevis (African clawed frog).